The primary structure comprises 291 residues: MTMKKLTSTTTTLWDNKLFINNLKNFMQTNTESNNNKTTAQEWKSFILVVVIALMIRILIIESFVVPTGSMKATILENDRIFGTKYSYGYSNYSLSFFDFIHLFKGRIFARTPERGDIIIFRPPHEMNTRYIKRLIGLPGDKVQLIDDVIYINDEKIERVESGIYVSEEGRKYLKFKETLPNGKTYFSYKLAPVLGIMFNDKYGNTDAFYVPEGEYFFLGDNRDQSNDSRIDLGFVPFENFIAKAQFIWFSTKITWWDSDIGVINLILKLKPWAESIRFNRIFRNLYSIED.

Residues 1 to 45 are Cytoplasmic-facing; sequence MTMKKLTSTTTTLWDNKLFINNLKNFMQTNTESNNNKTTAQEWKS. The chain crosses the membrane as a helical span at residues 46–66; the sequence is FILVVVIALMIRILIIESFVV. At 67–291 the chain is on the periplasmic side; it reads PTGSMKATIL…IFRNLYSIED (225 aa). Active-site residues include Ser70 and Lys133.

Belongs to the peptidase S26 family.

It localises to the cell inner membrane. It carries out the reaction Cleavage of hydrophobic, N-terminal signal or leader sequences from secreted and periplasmic proteins.. The polypeptide is Signal peptidase I (lepB) (Rickettsia bellii (strain RML369-C)).